Reading from the N-terminus, the 231-residue chain is Adenosylcobinamide-GDP ribazoletransferase (231 aa).

6 consecutive transmembrane segments (helical) span residues 29 to 49, 53 to 73, 101 to 121, 126 to 146, 167 to 187, and 211 to 231; these read ICAYFTFVGYLAGVFYFSMKL, NFLWTLLSVALGFYLFDLFHF, IGPFAFFYAALYIVAYLYAFL, IDLIYVAVLGRFSMNILLHFG, LISLVFTIPLVYFPLNYIISL, and DVLGATCMFSQLSIMVALSLI.

The protein belongs to the CobS family. Mg(2+) serves as cofactor.

The protein resides in the cell inner membrane. The enzyme catalyses alpha-ribazole + adenosylcob(III)inamide-GDP = adenosylcob(III)alamin + GMP + H(+). It catalyses the reaction alpha-ribazole 5'-phosphate + adenosylcob(III)inamide-GDP = adenosylcob(III)alamin 5'-phosphate + GMP + H(+). It participates in cofactor biosynthesis; adenosylcobalamin biosynthesis; adenosylcobalamin from cob(II)yrinate a,c-diamide: step 7/7. Its function is as follows. Joins adenosylcobinamide-GDP and alpha-ribazole to generate adenosylcobalamin (Ado-cobalamin). Also synthesizes adenosylcobalamin 5'-phosphate from adenosylcobinamide-GDP and alpha-ribazole 5'-phosphate. This is Adenosylcobinamide-GDP ribazoletransferase from Kosmotoga olearia (strain ATCC BAA-1733 / DSM 21960 / TBF 19.5.1).